The primary structure comprises 473 residues: Glutamate--tRNA ligase 2 (473 aa).

The 'HIGH' region motif lies at 11–21 (PSPTGYLHIGG). The segment covering 113-133 (KARAEGRPPRYDGRWRDRDPS) has biased composition (basic and acidic residues). The segment at 113–136 (KARAEGRPPRYDGRWRDRDPSEAP) is disordered. The short motif at 240–244 (KLSKR) is the 'KMSKS' region element. Position 243 (K243) interacts with ATP.

The protein belongs to the class-I aminoacyl-tRNA synthetase family. Glutamate--tRNA ligase type 1 subfamily. In terms of assembly, monomer.

The protein resides in the cytoplasm. It catalyses the reaction tRNA(Glu) + L-glutamate + ATP = L-glutamyl-tRNA(Glu) + AMP + diphosphate. Functionally, catalyzes the attachment of glutamate to tRNA(Glu) in a two-step reaction: glutamate is first activated by ATP to form Glu-AMP and then transferred to the acceptor end of tRNA(Glu). This chain is Glutamate--tRNA ligase 2, found in Brucella suis biovar 1 (strain 1330).